The primary structure comprises 49 residues: uncharacterized protein (49 aa).

This is an uncharacterized protein from Bacillus subtilis (strain 168).